We begin with the raw amino-acid sequence, 157 residues long: Cytochrome c-type biogenesis protein CcmE (157 aa).

Residues 1-7 (MTPRQRR) are Cytoplasmic-facing. Residues 8–28 (LGLLAAALACCGVAAALVLNA) traverse the membrane as a helical; Signal-anchor for type II membrane protein segment. The Periplasmic portion of the chain corresponds to 29–157 (FRANLVFFFS…GAMAAQELRR (129 aa)). Residues H123 and Y127 each coordinate heme.

It belongs to the CcmE/CycJ family.

Its subcellular location is the cell inner membrane. Its function is as follows. Heme chaperone required for the biogenesis of c-type cytochromes. Transiently binds heme delivered by CcmC and transfers the heme to apo-cytochromes in a process facilitated by CcmF and CcmH. This is Cytochrome c-type biogenesis protein CcmE from Cupriavidus taiwanensis (strain DSM 17343 / BCRC 17206 / CCUG 44338 / CIP 107171 / LMG 19424 / R1) (Ralstonia taiwanensis (strain LMG 19424)).